The chain runs to 465 residues: Zinc finger and BTB domain-containing protein 32 (465 aa).

The 59-residue stretch at 29–87 (CDTLITVGGLEFPAHSLVLAGASPRLGCRGRWALVEDISPSTFAQILTFVYGESIELQP) folds into the BTB domain. 2 disordered regions span residues 111 to 179 (RAQK…EMAG) and 285 to 310 (QNQLASSSPTPGSFPQGTESLSPWQI). Composition is skewed to basic and acidic residues over residues 123 to 139 (PGLKRHQQSEDFMRGSE) and 147 to 176 (EKQKPEKDFRSNGREQEMSHKHKAPGERPE). 3 C2H2-type zinc fingers span residues 350-372 (YSCSVCGKRFSLKHQMETHYRVH), 378-400 (FSCSLCPQRSRDFSAMTKHLRTH), and 405-427 (YRCPLCRAGCPSLASMQAHMRGH).

It belongs to the krueppel C2H2-type zinc-finger protein family. Homodimer (via PTB domain). Interacts with the N-terminal of FANCC. Interacts with ZBTB16. Interacts with GATA3. As to expression, isoform 1 is testis-specific and is not expressed in lymphoid organs such as thymus or spleen. Isoform 2 is expressed in both B- and T-lymphoid cells.

Its subcellular location is the nucleus. Functionally, DNA-binding protein that binds to the to a 5'-TGTACAGTGT-3' core sequence. May function as a transcriptional transactivator and transcriptional repressor. Probably exerts its repressor effect by preventing GATA3 from binding to DNA. May play a role in regulating the differentiation and activation of helper T-cells. The polypeptide is Zinc finger and BTB domain-containing protein 32 (Zbtb32) (Mus musculus (Mouse)).